Here is a 247-residue protein sequence, read N- to C-terminus: 5'-nucleotidase SurE (247 aa).

A divalent metal cation contacts are provided by D8, D9, S39, and N91.

It belongs to the SurE nucleotidase family. It depends on a divalent metal cation as a cofactor.

It is found in the cytoplasm. The enzyme catalyses a ribonucleoside 5'-phosphate + H2O = a ribonucleoside + phosphate. Its function is as follows. Nucleotidase that shows phosphatase activity on nucleoside 5'-monophosphates. The chain is 5'-nucleotidase SurE from Leptospira biflexa serovar Patoc (strain Patoc 1 / Ames).